We begin with the raw amino-acid sequence, 946 residues long: Leucine--tRNA ligase (946 aa).

Positions 43-53 (PYPNGTIHIGH) match the 'HIGH' region motif. The 'KMSKS' region motif lies at 638–642 (KMSKS). Lysine 641 lines the ATP pocket.

This sequence belongs to the class-I aminoacyl-tRNA synthetase family.

It localises to the cytoplasm. It catalyses the reaction tRNA(Leu) + L-leucine + ATP = L-leucyl-tRNA(Leu) + AMP + diphosphate. This chain is Leucine--tRNA ligase, found in Pyrobaculum calidifontis (strain DSM 21063 / JCM 11548 / VA1).